Consider the following 138-residue polypeptide: Cysteine desulfuration protein SufE (138 aa).

Cys51 acts as the Cysteine persulfide intermediate in catalysis.

The protein belongs to the SufE family. Homodimer. Interacts with SufS.

The protein resides in the cytoplasm. Its pathway is cofactor biosynthesis; iron-sulfur cluster biosynthesis. Participates in cysteine desulfuration mediated by SufS. Cysteine desulfuration mobilizes sulfur from L-cysteine to yield L-alanine and constitutes an essential step in sulfur metabolism for biosynthesis of a variety of sulfur-containing biomolecules. Functions as a sulfur acceptor for SufS, by mediating the direct transfer of the sulfur atom from the S-sulfanylcysteine of SufS, an intermediate product of cysteine desulfuration process. The protein is Cysteine desulfuration protein SufE of Pectobacterium carotovorum subsp. carotovorum (strain PC1).